Reading from the N-terminus, the 450-residue chain is Solute carrier family 52, riboflavin transporter, member 2 (450 aa).

Helical transmembrane passes span 14 to 34 (LLVA…WVEL), 47 to 67 (LPSY…LVTL), 79 to 99 (IPIQ…APLW), 114 to 136 (FLTL…LPFL), and 147 to 167 (FFLG…AQGV). Residue Asn178 is glycosylated (N-linked (GlcNAc...) asparagine). Residues 201–221 (FFWVLTALLGTSAAAFQGLLL) form a helical membrane-spanning segment. The disordered stretch occupies residues 230–268 (ATMGTGLRVETPGTEEEEEEEEASPLQEPPGQVASIVSS). A compositionally biased stretch (acidic residues) spans 242–252 (GTEEEEEEEEA). Transmembrane regions (helical) follow at residues 282–302 (ACLL…LPAV), 317–337 (LAVV…MAVL), 344–364 (LYGL…LAVL), 371–391 (VGTS…AGVF), and 409–429 (ALLA…IAMF).

It belongs to the riboflavin transporter family. Highly expressed in the placenta and small intestine, moderately in the kidney, colon, lung, prostate, uterus, and thymus, and weakly in all other tissues.

The protein resides in the cell membrane. It carries out the reaction riboflavin(in) = riboflavin(out). Its activity is regulated as follows. Riboflavin transport is Na(+)-independent but moderately pH-sensitive. Activity is strongly inhibited by riboflavin analogs, such as lumiflavin. Weakly inhibited by flavin adenine dinucleotide (FAD) and flavin mononucleotide (FMN). In terms of biological role, plasma membrane transporter mediating the uptake by cells of the water soluble vitamin B2/riboflavin that plays a key role in biochemical oxidation-reduction reactions of the carbohydrate, lipid, and amino acid metabolism. May also act as a receptor for 4-hydroxybutyrate. The protein is Solute carrier family 52, riboflavin transporter, member 2 (Slc52a2) of Rattus norvegicus (Rat).